Reading from the N-terminus, the 407-residue chain is BTB/POZ and MATH domain-containing protein 1 (407 aa).

The MATH domain maps to 33–167 (NGFHEFKICG…ENSLLVRCRV (135 aa)). The BTB domain maps to 203–270 (CDVVFQVDGE…IYWDELPDMQ (68 aa)).

The protein belongs to the Tdpoz family. Homodimer or heterodimer with BPM3, BPM5 and BPM6. Interacts with CUL3A and CUL3B. Interacts with RAP2-4 and RAP2-13. Binds to MYB56 at the promoter of FLOWERING LOCUS T (FT). In terms of tissue distribution, ubiquitous.

Its subcellular location is the nucleus. It functions in the pathway protein modification; protein ubiquitination. Functionally, may act as a substrate-specific adapter of an E3 ubiquitin-protein ligase complex (CUL3-RBX1-BTB) which mediates the ubiquitination and subsequent proteasomal degradation of target proteins. The polypeptide is BTB/POZ and MATH domain-containing protein 1 (BPM1) (Arabidopsis thaliana (Mouse-ear cress)).